The following is a 627-amino-acid chain: Threonine--tRNA ligase (627 aa).

The interval 1 to 147 (MRMLLIHSDY…TIVPSGEAKA (147 aa)) is editing domain. The segment at 208–507 (PHVRIMLEQE…QSKGIKPMFP (300 aa)) is catalytic. Positions 300, 352, and 476 each coordinate Zn(2+).

The protein belongs to the class-II aminoacyl-tRNA synthetase family. As to quaternary structure, homodimer. Requires Zn(2+) as cofactor.

Its subcellular location is the cytoplasm. It carries out the reaction tRNA(Thr) + L-threonine + ATP = L-threonyl-tRNA(Thr) + AMP + diphosphate + H(+). Its function is as follows. Catalyzes the attachment of threonine to tRNA(Thr) in a two-step reaction: L-threonine is first activated by ATP to form Thr-AMP and then transferred to the acceptor end of tRNA(Thr). Also edits incorrectly charged L-seryl-tRNA(Thr). This is Threonine--tRNA ligase from Thermococcus onnurineus (strain NA1).